Here is an 879-residue protein sequence, read N- to C-terminus: Metabotropic glutamate receptor 3 (879 aa).

The N-terminal stretch at 1-22 (MKMLTRLQVLTLALFSKGFLLS) is a signal peptide. Over 23–576 (LGDHNFLRRE…EDYIRWEDAW (554 aa)) the chain is Extracellular. Cysteines 57 and 99 form a disulfide. L-glutamate is bound by residues Ser-151 and 172–174 (AST). Asn-209 carries an N-linked (GlcNAc...) asparagine glycan. L-glutamate is bound at residue Tyr-222. 7 cysteine pairs are disulfide-bonded: Cys-240–Cys-527, Cys-361–Cys-373, Cys-412–Cys-419, Cys-509–Cys-528, Cys-513–Cys-531, Cys-534–Cys-546, and Cys-549–Cys-562. N-linked (GlcNAc...) asparagine glycosylation is present at Asn-292. Residue Asp-301 participates in L-glutamate binding. Residue Lys-389 participates in L-glutamate binding. Asn-414 and Asn-439 each carry an N-linked (GlcNAc...) asparagine glycan. A helical transmembrane segment spans residues 577–599 (AIGPVTIACLGFMCTCMVVTVFI). Residues 600–613 (KHNNTPLVKASGRE) are Cytoplasmic-facing. The helical transmembrane segment at 614–634 (LCYILLFGVGLSYCMTFFFIA) threads the bilayer. Over 635 to 645 (KPSPVICALRR) the chain is Extracellular. The helical transmembrane segment at 646–664 (LGLGSSFAICYSALLTKTN) threads the bilayer. The Cytoplasmic portion of the chain corresponds to 665–688 (CIARIFDGVKNGAQRPKFISPSSQ). Residues 689–709 (VFICLGLILVQIVMVSVWLIL) form a helical membrane-spanning segment. The Extracellular portion of the chain corresponds to 710 to 734 (EAPGTRRYTLAEKRETVILKCNVKD). Residues 735 to 756 (SSMLISLTYDVILVILCTVYAF) form a helical membrane-spanning segment. The Cytoplasmic portion of the chain corresponds to 757 to 769 (KTRKCPENFNEAK). The chain crosses the membrane as a helical span at residues 770–792 (FIGFTMYTTCIIWLAFLPIFYVT). The Extracellular segment spans residues 793 to 802 (SSDYRVQTTT). The chain crosses the membrane as a helical span at residues 803-828 (MCISVSLSGFVVLGCLFAPKVHIILF). Residues 829-879 (QPQKNVVTHRLHLNRFSVSGTGTTYSQSSASTYVPTVCNGREVLDSTTSSL) lie on the Cytoplasmic side of the membrane.

The protein belongs to the G-protein coupled receptor 3 family. In terms of assembly, interacts with TAMALIN. As to expression, detected in brain cortex, thalamus, subthalamic nucleus, substantia nigra, hypothalamus, hippocampus, corpus callosum, caudate nucleus and amygdala.

The protein resides in the cell membrane. G-protein coupled receptor for glutamate. Ligand binding causes a conformation change that triggers signaling via guanine nucleotide-binding proteins (G proteins) and modulates the activity of down-stream effectors. Signaling inhibits adenylate cyclase activity. The protein is Metabotropic glutamate receptor 3 (GRM3) of Homo sapiens (Human).